Reading from the N-terminus, the 1050-residue chain is Antibiotic efflux pump membrane transporter ArpB (1050 aa).

Helical transmembrane passes span Ile10–Leu30, Gly339–Leu359, Met370–Ile390, Leu393–Val413, Gly440–Gly460, Ile472–Leu492, Val539–Ile559, Met871–Glu891, Trp893–Ala913, Val923–Ile943, Ile972–Ala992, and Val1004–Val1024.

This sequence belongs to the resistance-nodulation-cell division (RND) (TC 2.A.6) family.

Its subcellular location is the cell inner membrane. Its function is as follows. The inner membrane transporter component of an antibiotic efflux pump. Confers resistance to numerous structurally unrelated antibiotics such as carbenicillin, chloramphenicol, erythromycin, novobiocin, streptomycin and tetracycline. Is not involved in organic solvent efflux. The polypeptide is Antibiotic efflux pump membrane transporter ArpB (arpB) (Pseudomonas putida (Arthrobacter siderocapsulatus)).